The following is a 644-amino-acid chain: Heat shock protein SSC3, mitochondrial (644 aa).

The protein belongs to the heat shock protein 70 family.

The protein localises to the mitochondrion matrix. The protein resides in the mitochondrion nucleoid. In terms of biological role, plays a role in facilitating the assembly of some protein complexes inside the mitochondria. It may initiate the events that lead to refolding of imported precursors in the matrix space. The polypeptide is Heat shock protein SSC3, mitochondrial (ECM10) (Saccharomyces cerevisiae (strain ATCC 204508 / S288c) (Baker's yeast)).